The sequence spans 90 residues: uncharacterized protein (90 aa).

The interval 62 to 90 (RQLKKKQAYKPDPEASFSWSANTSTRGRR) is disordered. Over residues 78 to 90 (FSWSANTSTRGRR) the composition is skewed to polar residues.

This is an uncharacterized protein from Escherichia coli (strain K12).